The sequence spans 372 residues: uncharacterized protein (372 aa).

The disordered stretch occupies residues 328–353; sequence KKGQPCKDEDAVTVPLPSSDPGKETQ.

In terms of biological role, induces the SOS system when expressed in E.coli, therefore, it may play a role in DNA metabolism and/or in genome stability. This is an uncharacterized protein from Saccharomyces cerevisiae (strain ATCC 204508 / S288c) (Baker's yeast).